A 491-amino-acid chain; its full sequence is Zinc finger protein 655 (491 aa).

The disordered stretch occupies residues 1-52 (MEEIPAQEAAGSPRVQFQSLETQSECLSPEPQFVQDTDMEQGLTGDGETREE). Polar residues predominate over residues 15-26 (VQFQSLETQSEC). Gln60 is modified (phosphoserine). Residues Lys77, Lys190, and Lys201 each participate in a glycyl lysine isopeptide (Lys-Gly) (interchain with G-Cter in SUMO2) cross-link. 6 consecutive C2H2-type zinc fingers follow at residues 212–234 (YKCD…QRIH), 240–262 (YKCK…KRIH), 303–325 (YKCS…QKIH), 330–353 (CKCT…RVHH), 380–402 (YTCS…QRIH), and 408–430 (HECN…HKMH).

It belongs to the krueppel C2H2-type zinc-finger protein family. Interacts with VAV1 and CDK4. Interacts with INTS13; promoting association with the integrator complex.

It is found in the nucleus. In terms of biological role, probable transcription factor. In Homo sapiens (Human), this protein is Zinc finger protein 655.